A 1418-amino-acid chain; its full sequence is ABC transporter G family member 38 (1418 aa).

Residues Met1 to Asp27 form a disordered region. The ABC transporter 1 domain occupies Thr147 to Glu419. An ATP-binding site is contributed by Gly179 to Ser186. The ABC transmembrane type-2 1 domain occupies Glu497 to Phe710. 6 helical membrane-spanning segments follow: residues Thr516–Trp536, Gly548–Phe568, Ile600–Thr620, Tyr634–Val654, Val659–Val679, and Phe729–Leu749. Residues Met821–Arg1073 enclose the ABC transporter 2 domain. An ATP-binding site is contributed by Gly866–Thr873. The ABC transmembrane type-2 2 domain occupies Ser1146–Tyr1360. The next 7 membrane-spanning stretches (helical) occupy residues Ala1167–Leu1187, Ile1197–Ala1217, Val1249–Gly1269, Ile1284–Val1304, Ile1310–Ile1330, Trp1341–Gly1361, and Phe1387–Ala1407.

This sequence belongs to the ABC transporter superfamily. ABCG family. PDR (TC 3.A.1.205) subfamily. As to expression, expressed in roots and siliques at low levels.

Its subcellular location is the membrane. Its function is as follows. May be a general defense protein. The chain is ABC transporter G family member 38 (ABCG38) from Arabidopsis thaliana (Mouse-ear cress).